Here is a 125-residue protein sequence, read N- to C-terminus: Probable 4-amino-4-deoxy-L-arabinose-phosphoundecaprenol flippase subunit ArnF (125 aa).

Residues 1–2 lie on the Cytoplasmic side of the membrane; sequence MG. Residues 3–23 form a helical membrane-spanning segment; the sequence is VMWGLISVAIASLAQLSLGFA. Topologically, residues 24 to 33 are periplasmic; it reads MMRLPSIAHP. Residues 34–54 form a helical membrane-spanning segment; sequence LAFISGLGAFNAATLALFAGL. Topologically, residues 55-76 are cytoplasmic; that stretch reads AGYLVSVFCWQKTLHTLALSKA. Residues 77 to 97 form a helical membrane-spanning segment; sequence YALLSLSYVLVWVASMLLPGL. The Periplasmic portion of the chain corresponds to 98-100; sequence QGA. Residues 101 to 121 form a helical membrane-spanning segment; sequence FSLKAMLGVLCIMAGVMLIFL. At 122–125 the chain is on the cytoplasmic side; that stretch reads PARS.

Belongs to the ArnF family. In terms of assembly, heterodimer of ArnE and ArnF.

The protein localises to the cell inner membrane. Its pathway is bacterial outer membrane biogenesis; lipopolysaccharide biosynthesis. In terms of biological role, translocates 4-amino-4-deoxy-L-arabinose-phosphoundecaprenol (alpha-L-Ara4N-phosphoundecaprenol) from the cytoplasmic to the periplasmic side of the inner membrane. The chain is Probable 4-amino-4-deoxy-L-arabinose-phosphoundecaprenol flippase subunit ArnF from Salmonella choleraesuis (strain SC-B67).